The following is a 223-amino-acid chain: MEVKIEESWKEMLKGEFCKSYFKRLVNFIKNEYKTKKDKIFPSPKLIFNAFDSLPFKDIKIVILGQDPYHGKGQANGLAFSVNSDIKIPPSLQNIFKEIERSLKIKTIPNGDLTRWATQGVFLLNSILTVEEGRPSSHKDIGWEIFTNEVIKIISKNLNNVVFMLWGNFARGKKELIDASKHLILETSHPSPYSAHNGFLGSNHFSQTLKYLKEHNKISIDFQ.

The Proton acceptor role is filled by aspartate 67.

The protein belongs to the uracil-DNA glycosylase (UDG) superfamily. UNG family.

The protein resides in the cytoplasm. It catalyses the reaction Hydrolyzes single-stranded DNA or mismatched double-stranded DNA and polynucleotides, releasing free uracil.. In terms of biological role, excises uracil residues from the DNA which can arise as a result of misincorporation of dUMP residues by DNA polymerase or due to deamination of cytosine. The sequence is that of Uracil-DNA glycosylase from Borrelia turicatae (strain 91E135).